The primary structure comprises 153 residues: Histone H2B.4 (153 aa).

2 stretches are compositionally biased toward basic and acidic residues: residues 1-10 (MAPKKDEKPA) and 20-54 (AKAE…GEKK). Residues 1–60 (MAPKKDEKPATAEAGAEAPAKAEAKPKAEKAAKKAKKEPSKKAAKEPKGDGEKKDKKKKK) form a disordered region. An N6-acetyllysine mark is found at Lys-41 and Lys-42. Lys-149 is covalently cross-linked (Glycyl lysine isopeptide (Lys-Gly) (interchain with G-Cter in ubiquitin)).

It belongs to the histone H2B family. The nucleosome is a histone octamer containing two molecules each of H2A, H2B, H3 and H4 assembled in one H3-H4 heterotetramer and two H2A-H2B heterodimers. The octamer wraps approximately 147 bp of DNA. Post-translationally, the N-terminus is blocked. Can be acetylated to form H2BK33ac and H2BK34ac. Acetylated mainly on the ubiquitinated form. In terms of processing, monoubiquitinated to form H2BK143ub1; which is increased during the light period and may give a specific tag for epigenetic transcriptional activation.

Its subcellular location is the nucleus. The protein localises to the chromosome. Functionally, core component of nucleosome. Nucleosomes wrap and compact DNA into chromatin, limiting DNA accessibility to the cellular machineries which require DNA as a template. Histones thereby play a central role in transcription regulation, DNA repair, DNA replication and chromosomal stability. DNA accessibility is regulated via a complex set of post-translational modifications of histones, also called histone code, and nucleosome remodeling. The sequence is that of Histone H2B.4 from Chlamydomonas reinhardtii (Chlamydomonas smithii).